A 303-amino-acid polypeptide reads, in one-letter code: Pantothenate synthetase (303 aa).

The disordered stretch occupies residues 1–21 (MIATGHGGAERRTTAGDGTAR). 48 to 55 (MGALHDGH) contributes to the ATP binding site. His-55 functions as the Proton donor in the catalytic mechanism. Gln-79 is a binding site for (R)-pantoate. Gln-79 is a beta-alanine binding site. 165–168 (GRKD) is an ATP binding site. Residue Gln-171 participates in (R)-pantoate binding. 202–205 (ASSR) serves as a coordination point for ATP.

The protein belongs to the pantothenate synthetase family. Homodimer.

The protein localises to the cytoplasm. The catalysed reaction is (R)-pantoate + beta-alanine + ATP = (R)-pantothenate + AMP + diphosphate + H(+). It functions in the pathway cofactor biosynthesis; (R)-pantothenate biosynthesis; (R)-pantothenate from (R)-pantoate and beta-alanine: step 1/1. Its function is as follows. Catalyzes the condensation of pantoate with beta-alanine in an ATP-dependent reaction via a pantoyl-adenylate intermediate. In Acidothermus cellulolyticus (strain ATCC 43068 / DSM 8971 / 11B), this protein is Pantothenate synthetase.